We begin with the raw amino-acid sequence, 251 residues long: Uridylate kinase (251 aa).

ATP is bound at residue 19–22 (KLSG). G61 contacts UMP. G62 and R66 together coordinate ATP. UMP is bound by residues D81 and 142–149 (IGNPFFTT). Positions 169, 170, 175, and 178 each coordinate ATP.

It belongs to the UMP kinase family. Homohexamer.

The protein localises to the cytoplasm. The catalysed reaction is UMP + ATP = UDP + ADP. It participates in pyrimidine metabolism; CTP biosynthesis via de novo pathway; UDP from UMP (UMPK route): step 1/1. Its activity is regulated as follows. Inhibited by UTP. Its function is as follows. Catalyzes the reversible phosphorylation of UMP to UDP. This chain is Uridylate kinase, found in Hyphomonas neptunium (strain ATCC 15444).